Reading from the N-terminus, the 239-residue chain is Probable transcriptional regulatory protein Aave_3203 (239 aa).

The interval 1 to 20 (MAGHSKWANIQHRKGRQDEK) is disordered.

The protein belongs to the TACO1 family.

The protein resides in the cytoplasm. The protein is Probable transcriptional regulatory protein Aave_3203 of Paracidovorax citrulli (strain AAC00-1) (Acidovorax citrulli).